A 1006-amino-acid chain; its full sequence is Collagen alpha-2(I) chain (1006 aa).

The tract at residues 1-84 (SGGFDFSFLP…GFPGTPGLPG (84 aa)) is disordered. 4 positions are modified to 4-hydroxyproline: Pro-10, Pro-13, Pro-35, and Pro-41. The span at 28–64 (LMGPRGPPGASGAPGPQGFQGPAGEPGEPGQTGPAGA) shows a compositional bias: low complexity. Residue Lys-86 is modified to 5-hydroxylysine; alternate. O-linked (Gal...) hydroxylysine; alternate glycosylation is present at Lys-86. The segment at 99-1006 (GQPGAAGVKG…FGYEGDFYRA (908 aa)) is disordered. Composition is skewed to low complexity over residues 142-163 (SRGSDGSVGPVGPAGPIGSAGP) and 209-230 (PGANGLTGAKGAAGLPGVAGAP). The segment covering 264 to 273 (GESGGKGEPG) has biased composition (gly residues). A compositionally biased stretch (low complexity) spans 274–284 (SAGPQGPPGSS). The span at 306 to 315 (GLRGGPGSRG) shows a compositional bias: gly residues. Positions 328–344 (PAGARGASGPAGVRGPS) are enriched in low complexity. A 4-hydroxyproline mark is found at Pro-350 and Pro-353. Low complexity predominate over residues 379 to 398 (LPGIDGRPGPIGPAGARGEA). A compositionally biased stretch (gly residues) spans 447 to 456 (GVQGGKGEQG). 2 stretches are compositionally biased toward low complexity: residues 503–520 (PGESGAVGPSGAIGSRGP) and 532–542 (EPGVVGAPGTA). A compositionally biased stretch (gly residues) spans 543-552 (GPAGSGGLPG). 2 stretches are compositionally biased toward low complexity: residues 585–615 (AVGAPGPAGATGDRGEAGAAGPAGPAGPRGS) and 622–642 (VGPAGPNGFAGPAGAAGQPGA). Residues 643 to 652 (KGERGTKGPK) show a composition bias toward basic and acidic residues. Low complexity predominate over residues 660-670 (PTGPVGSAGPA). Residues 680–689 (GSRGDGGPPG) are compositionally biased toward gly residues. Residues 691–700 (TGFPGAAGRT) show a composition bias toward low complexity. Over residues 737–746 (GETGAGGPPG) the composition is skewed to gly residues. 2 stretches are compositionally biased toward low complexity: residues 754-781 (SGEPGTAGPPGTAGPQGLLGAPGILGLP) and 789-799 (LPGVAGAVGEP). The segment covering 800–810 (GPLGIGPPGAR) has biased composition (gly residues). Over residues 837–882 (YAGNPGPVGAAGAPGPHGAVGPAGKHGNRGEPGPVGSAGPVGALGP) the composition is skewed to low complexity. Over residues 892-903 (RGDKGEAGDKGP) the composition is skewed to basic and acidic residues. Residues 976 to 988 (SGPPGPPGPPGPP) are compositionally biased toward pro residues.

This sequence belongs to the fibrillar collagen family. As to quaternary structure, trimers of one alpha 2(I) and two alpha 1(I) chains. Interacts (via C-terminus) with TMEM131 (via PapD-L domain); the interaction is direct and is involved in assembly and TRAPPIII ER-to-Golgi transport complex-dependent secretion of collagen. In terms of processing, prolines at the third position of the tripeptide repeating unit (G-X-Y) are hydroxylated in some or all of the chains. In terms of tissue distribution, expressed in bones.

The protein localises to the secreted. It localises to the extracellular space. It is found in the extracellular matrix. Type I collagen is a member of group I collagen (fibrillar forming collagen). The polypeptide is Collagen alpha-2(I) chain (Choloepus hoffmanni (Hoffmann's two-fingered sloth)).